The following is a 483-amino-acid chain: Regulatory protein ViaA (483 aa).

The protein belongs to the ViaA family. Homodimer. Interacts with RavA.

It is found in the cytoplasm. Component of the RavA-ViaA chaperone complex, which may act on the membrane to optimize the function of some of the respiratory chains. ViaA stimulates the ATPase activity of RavA. This chain is Regulatory protein ViaA, found in Escherichia coli O1:K1 / APEC.